A 901-amino-acid chain; its full sequence is Protein translocase subunit SecA (901 aa).

Residues Q87, G105 to T109, and D512 each bind ATP. Zn(2+) contacts are provided by C885, C887, C896, and H897.

This sequence belongs to the SecA family. As to quaternary structure, monomer and homodimer. Part of the essential Sec protein translocation apparatus which comprises SecA, SecYEG and auxiliary proteins SecDF-YajC and YidC. Requires Zn(2+) as cofactor.

It localises to the cell inner membrane. Its subcellular location is the cytoplasm. The catalysed reaction is ATP + H2O + cellular proteinSide 1 = ADP + phosphate + cellular proteinSide 2.. Its function is as follows. Part of the Sec protein translocase complex. Interacts with the SecYEG preprotein conducting channel. Has a central role in coupling the hydrolysis of ATP to the transfer of proteins into and across the cell membrane, serving both as a receptor for the preprotein-SecB complex and as an ATP-driven molecular motor driving the stepwise translocation of polypeptide chains across the membrane. The chain is Protein translocase subunit SecA from Salmonella enteritidis PT4 (strain P125109).